The following is a 676-amino-acid chain: MSSLQELCSGLPLRPLPENRGRWAGVPHAPVRTPNLSPEEEQLALRNALRYFPPDVQKLLALEFAQELRQFGHIYMYRFCPSIEMRAYPIDQYPCRTRAAAAIMHMIMNNLDPAVAQFPQELVTYGGNGQVFSNWAQFRLTMSYLSKMTEEQTLVMYSGHPLGLFPSSPRAPRLVITNGMVIPNYSSRTEYEKLFALGVTMYGQMTAGSYCYIGPQGIVHGTVLTVLNAGRRYLGIENLAGKVFVTSGLGGMSGAQAKAAAIVGCIGVIAEVDKAALVKRHRQGWLMEVTDSLDRCIARLREARKKKEVLSLGYHGNVVDLWERLVHELDTTGELLVDLGSDQTSCHNPFNGGYYPVQLSFSEAQSLMSSNPAAFKHLVQESLRRHVAAINRLAQEKFFFWDYGNAFLLEAQRAGADVEKKGANKMEFRYPSYVQHIMGDIFSQGFGPFRWVCTSGDPQDLAVTDHLATSVLEKAIADGVKASVKLQYMDNIRWIREAAKHQLVVGSQARILYSDQKGRVAIAVAINQAIASGKIKAPVVLSRDHHDVSGTDSPFRETSNIYDGSAFCADMAVQNFVGDACRGATWVALHNGGGVGWGEVINGGFGLVLDGTAEAEQKARMMLSWDVSNGVARRCWSGNPKAYEIICQTMQENSGLVVTLPHEVADEQVLQQALRP.

Residues 126–127, Gln-204, 251–253, Glu-271, 317–318, 343–347, 354–355, and Tyr-403 each bind NAD(+); these read GG, GMS, NV, QTSCH, and YY. Lys-534 is subject to N6-succinyllysine. Gly-594 contributes to the NAD(+) binding site.

This sequence belongs to the urocanase family. NAD(+) serves as cofactor.

It carries out the reaction 4-imidazolone-5-propanoate = trans-urocanate + H2O. Its pathway is amino-acid degradation; L-histidine degradation into L-glutamate; N-formimidoyl-L-glutamate from L-histidine: step 2/3. This Mus musculus (Mouse) protein is Urocanate hydratase (Uroc1).